We begin with the raw amino-acid sequence, 522 residues long: ATP synthase subunit alpha 2 (522 aa).

Gly176–Thr183 lines the ATP pocket.

This sequence belongs to the ATPase alpha/beta chains family. As to quaternary structure, F-type ATPases have 2 components, CF(1) - the catalytic core - and CF(0) - the membrane proton channel. CF(1) has five subunits: alpha(3), beta(3), gamma(1), delta(1), epsilon(1). CF(0) has three main subunits: a(1), b(2) and c(9-12). The alpha and beta chains form an alternating ring which encloses part of the gamma chain. CF(1) is attached to CF(0) by a central stalk formed by the gamma and epsilon chains, while a peripheral stalk is formed by the delta and b chains.

Its subcellular location is the cell inner membrane. The catalysed reaction is ATP + H2O + 4 H(+)(in) = ADP + phosphate + 5 H(+)(out). Produces ATP from ADP in the presence of a proton gradient across the membrane. The alpha chain is a regulatory subunit. In Syntrophotalea carbinolica (strain DSM 2380 / NBRC 103641 / GraBd1) (Pelobacter carbinolicus), this protein is ATP synthase subunit alpha 2.